The sequence spans 194 residues: Probable chorismate pyruvate-lyase (194 aa).

The substrate site is built by arginine 77, leucine 115, and glutamate 176.

The protein belongs to the UbiC family.

Its subcellular location is the cytoplasm. The enzyme catalyses chorismate = 4-hydroxybenzoate + pyruvate. It functions in the pathway cofactor biosynthesis; ubiquinone biosynthesis. Removes the pyruvyl group from chorismate, with concomitant aromatization of the ring, to provide 4-hydroxybenzoate (4HB) for the ubiquinone pathway. The chain is Probable chorismate pyruvate-lyase from Cupriavidus pinatubonensis (strain JMP 134 / LMG 1197) (Cupriavidus necator (strain JMP 134)).